A 423-amino-acid chain; its full sequence is MSSILDELDWRGLIAQSTDRDALAAELAAGPMTLYSGFDPTAPSLHAGHLVPLLTLRRFQQAGHRPIVLAGGATGMIGDPRDTGERTLQTADTVADWADRIRGQLERFVEFDESPTGAIVENNLSWTGALSTIEFLRDVGKYFSVNVMLDRDTVRRRLEGEGISYTEFSYMLLQANDYVQLRKRHGCALQIGGSDQWGNIVAGVRLVRQKLGDTVHAMTTPLVTDSEGKKFGKSTGGGNLWLDPEMTTPYAWYQYFINTADADVVNYLRWFTFLEAGELAELEEATRDRPHQRTAQRRLARELTTLVHGEDATRSVEHASQALFGRGELAALDEPTLAAALREASVAELTPSGPDLITDLLVATGLSASKGAARRTIAEGGVSVNNMKIDSDEWTPQASDFLHGRWLVLRRGKRNIAGVQRVG.

Residue tyrosine 35 coordinates L-tyrosine. A 'HIGH' region motif is present at residues 40-49 (PTAPSLHAGH). The L-tyrosine site is built by tyrosine 170 and glutamine 174. A 'KMSKS' region motif is present at residues 230–234 (KFGKS). Residue lysine 233 coordinates ATP. Residues 355 to 412 (DLITDLLVATGLSASKGAARRTIAEGGVSVNNMKIDSDEWTPQASDFLHGRWLVLRRG) form the S4 RNA-binding domain.

This sequence belongs to the class-I aminoacyl-tRNA synthetase family. TyrS type 1 subfamily. Homodimer.

It localises to the cytoplasm. It catalyses the reaction tRNA(Tyr) + L-tyrosine + ATP = L-tyrosyl-tRNA(Tyr) + AMP + diphosphate + H(+). Its function is as follows. Catalyzes the attachment of tyrosine to tRNA(Tyr) in a two-step reaction: tyrosine is first activated by ATP to form Tyr-AMP and then transferred to the acceptor end of tRNA(Tyr). The polypeptide is Tyrosine--tRNA ligase (Mycobacterium sp. (strain KMS)).